Reading from the N-terminus, the 87-residue chain is Apoptosis inducing factor BLCAP B (87 aa).

A run of 2 helical transmembrane segments spans residues 19 to 39 (PALW…FLLE) and 43 to 63 (CTIC…SCWG).

Belongs to the BLCAP family.

The protein resides in the cytoplasm. The protein localises to the nucleus. Its subcellular location is the membrane. Acts as a tumor suppressor; induces growth arrest at G(1)/S checkpoint and apoptosis via RB1-dependent and p53/TP53- and NF-kappa-B-independent mechanisms. Modulates expression of genes involved in the regulation of proliferation, cell cycle and apoptosis. This chain is Apoptosis inducing factor BLCAP B (blcap-b), found in Xenopus laevis (African clawed frog).